Here is a 487-residue protein sequence, read N- to C-terminus: GTPase Der (487 aa).

2 EngA-type G domains span residues 3-166 (PVIA…PRDA) and 193-366 (IKIA…KSAV). Residues 9–16 (GRPNVGKS), 56–60 (DTGGI), 118–121 (NKID), 199–206 (GRPNVGKS), 246–250 (DTAGV), and 311–314 (NKWD) contribute to the GTP site. A KH-like domain is found at 367 to 451 (TRWPTSRLTQ…PIRIEYKGGE (85 aa)). Residues 448-461 (KGGENPYEGKKNTL) show a composition bias toward basic and acidic residues. A disordered region spans residues 448 to 487 (KGGENPYEGKKNTLTDRQVNKKRRLMSHHKKAEKKRRDKR). Residues 467–487 (NKKRRLMSHHKKAEKKRRDKR) show a composition bias toward basic residues.

This sequence belongs to the TRAFAC class TrmE-Era-EngA-EngB-Septin-like GTPase superfamily. EngA (Der) GTPase family. As to quaternary structure, associates with the 50S ribosomal subunit.

GTPase that plays an essential role in the late steps of ribosome biogenesis. This Pseudomonas putida (strain W619) protein is GTPase Der.